The primary structure comprises 155 residues: Transcription antitermination protein NusB (155 aa).

It belongs to the NusB family.

Functionally, involved in transcription antitermination. Required for transcription of ribosomal RNA (rRNA) genes. Binds specifically to the boxA antiterminator sequence of the ribosomal RNA (rrn) operons. The protein is Transcription antitermination protein NusB of Halorhodospira halophila (strain DSM 244 / SL1) (Ectothiorhodospira halophila (strain DSM 244 / SL1)).